A 479-amino-acid polypeptide reads, in one-letter code: GTPase Der (479 aa).

2 EngA-type G domains span residues Pro3–Tyr166 and Leu192–Thr365. Residues Gly9 to Ser16, Asp56 to Ile60, Asn118 to Asp121, Gly198 to Ser205, Asp245 to Val249, and Asn310 to Asp313 each bind GTP. Positions Gln366–Val450 constitute a KH-like domain.

It belongs to the TRAFAC class TrmE-Era-EngA-EngB-Septin-like GTPase superfamily. EngA (Der) GTPase family. Associates with the 50S ribosomal subunit.

GTPase that plays an essential role in the late steps of ribosome biogenesis. The protein is GTPase Der of Idiomarina loihiensis (strain ATCC BAA-735 / DSM 15497 / L2-TR).